Here is a 367-residue protein sequence, read N- to C-terminus: Leucine dehydrogenase (367 aa).

The active site involves Lys-80. 180–186 (GVGNVAY) is a binding site for NAD(+).

It belongs to the Glu/Leu/Phe/Val dehydrogenases family. In terms of assembly, homohexamer.

The catalysed reaction is L-leucine + NAD(+) + H2O = 4-methyl-2-oxopentanoate + NH4(+) + NADH + H(+). The protein operates within amino-acid degradation; L-leucine degradation; 4-methyl-2-oxopentanoate from L-leucine (dehydrogenase route): step 1/1. In terms of biological role, catalyzes the reversible deamination of L-leucine to 4-methyl-2-oxopentanoate. The protein is Leucine dehydrogenase (ldh) of Geobacillus stearothermophilus (Bacillus stearothermophilus).